The chain runs to 92 residues: Serine rich endogenous peptide 11 (92 aa).

An N-terminal signal peptide occupies residues 1-29; sequence MENNTFSSKSINLLILLLLLCTFLCQTES. Residues 50–92 form a disordered region; the sequence is PNTDIGTPSSTSDRGGGGNGRRLMSQMDVGASSSGQGGGRNRH. Residues 53 to 62 show a composition bias toward polar residues; that stretch reads DIGTPSSTSD. 2 short sequence motifs (SCOOP motif) span residues 53–67 and 75–89; these read DIGT…GGGG and QMDV…GGGR. 2 short sequence motifs (sxS motif essential for MIK2 binding) span residues 59–61 and 81–83; these read STS and SSS.

It belongs to the serine rich endogenous peptide (SCOOP) phytocytokine family. In terms of assembly, interacts with MIK2 (via extracellular leucine-rich repeat domain); this interaction triggers the formation of complex between MIK2 and the BAK1/SERK3 and SERK4 coreceptors, and subsequent BAK1 activation by phosphorylation. In terms of tissue distribution, mostly expressed in seedlings shoots and roots, and, to a lower extent, in leaves.

It is found in the cell membrane. Its subcellular location is the secreted. The protein localises to the extracellular space. The protein resides in the apoplast. In terms of biological role, brassicaceae-specific phytocytokine (plant endogenous peptide released into the apoplast) perceived by MIK2 in a BAK1/SERK3 and SERK4 coreceptors-dependent manner, that modulates various physiological and antimicrobial processes including growth prevention and reactive oxygen species (ROS) response regulation. The sequence is that of Serine rich endogenous peptide 11 from Arabidopsis thaliana (Mouse-ear cress).